Reading from the N-terminus, the 388-residue chain is 2-methylene-furan-3-one reductase (388 aa).

The N-terminal 60 residues, Met-1–Ser-60, are a transit peptide targeting the chloroplast. NADP(+) contacts are provided by residues Lys-125, Gly-240–Val-241, Ser-263–Lys-266, Tyr-281, Phe-330–Val-332, and Arg-377–Ala-378. A substrate-binding site is contributed by Lys-125.

Belongs to the zinc-containing alcohol dehydrogenase family. Quinone oxidoreductase subfamily. In terms of assembly, monomer.

It localises to the plastid. Its subcellular location is the chloroplast. The enzyme catalyses 4-hydroxy-2,5-dimethyl-furan-3(2H)-one + NADP(+) = 4-hydroxy-5-methyl-2-methylenefuran-3(2H)-one + NADPH + H(+). Enone oxidoreductase involved in the biosynthesis of 4-hydroxy-2,5-dimethyl-3(2H)-furanone (HDMF or furaneol). Can use both NADH and NADPH as the electron donor. The protein is 2-methylene-furan-3-one reductase (EO) of Solanum lycopersicum (Tomato).